The primary structure comprises 1214 residues: MYKSLLDKAGLGSITSVRFLGDQQSVFVSKDLLKPIQDVNSLRLSLTDNQTVSKEFQALIVKHLDESHLLQGDKNLVGSEVRIYSLDPSTQWFSATVVHGNPSSKTLQVNCEEIPALKIVDPALIHVEVVHDNFVTCGNSTRIGAVKRKSSENNGSSVSKQAKSCSEVSPSMCPVQSVPTTVCKEILLGCTAATPSSNRQQNTPQAANSPPNIGAKLPQGCHKQSLPEEISSCLNTKSEVLRTKPDVCKAGLLSSKSSQVGAGDLKILSEPKGSCIQPKTNTDQESRLESTPQPVTGLTKECLVTKTSSKAELDNATAPELQKRLEHTASTPDGLSDKPEVEAGVTRLNSCSEKKVGPSDLGSQSQNLKETSVKVDHDSCCTRSSNKTQTPPARKSVLTDPDKLKKLQQSGEAFVQDDSCVNIVAQLPKCRECRLDSLRKDKDQQKDSPVFCRFFHFRRLQFNKHGVLRVEGFLTPNKYDSEAIGLWLPLTKNVVGTDLDTAKYILANIGDHFCQMVISEKEAMSTIEPHRQVAWKRAVKGVREMCDVCDTTIFNLHWVCPRCGFGVCVDCYRLKRKNCQQGAAYKTFSWIRCVKSQIHEPENLMPTQIIPGKALYDVGDIVHSVRAKWGIKANCPCSNRQFKLFSKPALKEDLKQASLSGEKPSLGTMVQQSSPVLEPAAVCGEAPSKPASNVKPICPANTSPLNWLADLTSGNVNKENKEKQLTMPILKNEIKCLPPLPPLNKSSTVLHTFNSTILTPVSNNNSGFLRNLLNSSTGKTENGLKNTPKILDDIFASLVQNKTSSDLSKRPQGLTIKPSILGFDTPHYWLCDNRLLCLQDPNNKSNWNVFRECWKQGQPVMVSGVHHKLNTELWKPESFRKEFGEQEVDLVNCRTNEIITGATVGDFWDGFEDVPNRLKNEKEKEPMVLKLKDWPPGEDFRDMMPSRFDDLMANIPLPEYTRRDGKLNLASRLPNYFVRPDLGPKMYNAYGLITPEDRKYGTTNLHLDVSDAANVMVYVGIPKGQCEQEEEVLRTIQDGDSDELTIKRFIEGKEKPGALWHIYAAKDTEKIREFLKKVSEEQGQENPADHDPIHDQSWYLDRSLRKRLYQEYGVQGWAIVQFLGDVVFIPAGAPHQVHNLYSCIKVAEDFVSPEHVKHCFWLTQEFRHLSQTHTNHEDKLQVKNVIYHAVKDAVAMLKAVNPVWANVNSSAHWR.

2 positions are modified to phosphoserine: Ser-150 and Ser-209. Residues 194 to 211 are compositionally biased toward polar residues; that stretch reads TPSSNRQQNTPQAANSPP. Disordered stretches follow at residues 194 to 215, 271 to 293, and 310 to 398; these read TPSS…NIGA, PKGS…STPQ, and KAEL…KSVL. Position 330 is a phosphoserine (Ser-330). Polar residues predominate over residues 361-370; it reads LGSQSQNLKE. Residues 371-380 show a composition bias toward basic and acidic residues; that stretch reads TSVKVDHDSC. Positions 381–391 are enriched in polar residues; sequence CTRSSNKTQTP. A C6-type zinc finger spans residues 546–571; that stretch reads CDVCDTTIFNLHWVCPRCGFGVCVDC. The LXXLL motif signature appears at 769–773; the sequence is LRNLL. Lys-779 bears the N6-acetyllysine mark. Residues 944-1167 form the JmjC domain; it reads MPSRFDDLMA…HCFWLTQEFR (224 aa). His-1006, Asp-1008, and His-1135 together coordinate Fe cation.

The protein belongs to the JHDM2 histone demethylase family. Interacts with VRK1. The cofactor is Fe(2+). Testis specific. Expressed only in male germ cells.

It is found in the cytoplasm. The protein resides in the nucleus. The enzyme catalyses N(6),N(6)-dimethyl-L-lysyl(9)-[histone H3] + 2 2-oxoglutarate + 2 O2 = L-lysyl(9)-[histone H3] + 2 formaldehyde + 2 succinate + 2 CO2. Functionally, histone demethylase that specifically demethylates 'Lys-9' of histone H3, thereby playing a central role in histone code. Preferentially demethylates mono- and dimethylated H3 'Lys-9' residue, with a preference for dimethylated residue, while it has weak or no activity on trimethylated H3 'Lys-9'. Demethylation of Lys residue generates formaldehyde and succinate. Involved in hormone-dependent transcriptional activation, by participating in recruitment to androgen-receptor target genes, resulting in H3 'Lys-9' demethylation and transcriptional activation. Involved in spermatogenesis by regulating expression of target genes such as PRM1 and TNP1 which are required for packaging and condensation of sperm chromatin. Directly regulates expression of PPARA and UCP1 and is involved in obesity resistance. This is Lysine-specific demethylase 3A (Kdm3a) from Rattus norvegicus (Rat).